A 449-amino-acid chain; its full sequence is C4-dicarboxylate transport protein 1 (449 aa).

9 helical membrane passes run 14–34 (SIFL…VGIP), 47–67 (FIKL…VNGI), 83–103 (SVIY…VVAY), 157–177 (ILQV…VGEQ), 195–215 (IMGM…AFTT), 226–246 (LGAL…AVLG), 312–332 (FSIY…TPLA), 359–379 (VILA…LVLV), and 385–405 (FMGI…TVTI).

Belongs to the dicarboxylate/amino acid:cation symporter (DAACS) (TC 2.A.23) family.

The protein localises to the cell inner membrane. Functionally, responsible for the transport of dicarboxylates such as succinate, fumarate, and malate from the periplasm across the membrane. This chain is C4-dicarboxylate transport protein 1, found in Pseudomonas aeruginosa (strain UCBPP-PA14).